The primary structure comprises 101 residues: Ubiquitin-related modifier 1 homolog (101 aa).

Residue glycine 101 is modified to 1-thioglycine. Glycine 101 participates in a covalent cross-link: Glycyl lysine isopeptide (Gly-Lys) (interchain with K-? in acceptor proteins).

This sequence belongs to the URM1 family. Interacts with cer. Post-translationally, C-terminal thiocarboxylation occurs in 2 steps, it is first acyl-adenylated (-COAMP) via the hesA/moeB/thiF part of the MOCS3 homolog, then thiocarboxylated (-COSH) via the rhodanese domain of the MOCS3 homolog.

The protein resides in the cytoplasm. It participates in tRNA modification; 5-methoxycarbonylmethyl-2-thiouridine-tRNA biosynthesis. In terms of biological role, acts as a sulfur carrier required for 2-thiolation of mcm(5)S(2)U at tRNA wobble positions of cytosolic tRNA(Lys), tRNA(Glu) and tRNA(Gln). Serves as sulfur donor in tRNA 2-thiolation reaction by being thiocarboxylated (-COSH) at its C-terminus by MOCS3. The sulfur is then transferred to tRNA to form 2-thiolation of mcm(5)S(2)U. Also acts as a ubiquitin-like protein (UBL) that is covalently conjugated via an isopeptide bond to lysine residues of target proteins such as Prx2/Jafrac1, Ciao1, Eip71CD and GILT1. The thiocarboxylated form serves as substrate for conjugation and oxidative stress specifically induces the formation of UBL-protein conjugates. The sequence is that of Ubiquitin-related modifier 1 homolog from Drosophila yakuba (Fruit fly).